The following is a 280-amino-acid chain: Cytochrome c1 (280 aa).

A signal peptide spans 1–21 (MKKLLISAVSALVLGSGAALA). Positions 55, 58, 59, and 205 each coordinate heme c. The chain crosses the membrane as a helical span at residues 249–267 (MGLVAVVMLGLLSVMLYLT).

As to quaternary structure, the main subunits of complex b-c1 are: cytochrome b, cytochrome c1 and the Rieske protein. Post-translationally, binds 1 heme c group covalently per subunit.

It localises to the cell membrane. In terms of biological role, component of the ubiquinol-cytochrome c reductase complex (complex III or cytochrome b-c1 complex), which is a respiratory chain that generates an electrochemical potential coupled to ATP synthesis. c1 functions as an electron donor to cytochrome c. The protein is Cytochrome c1 (petC) of Rhodobacter capsulatus (Rhodopseudomonas capsulata).